Consider the following 325-residue polypeptide: ATP phosphoribosyltransferase (325 aa).

The protein belongs to the ATP phosphoribosyltransferase family. Long subfamily. The cofactor is Mg(2+).

The protein resides in the cytoplasm. The catalysed reaction is 1-(5-phospho-beta-D-ribosyl)-ATP + diphosphate = 5-phospho-alpha-D-ribose 1-diphosphate + ATP. The protein operates within amino-acid biosynthesis; L-histidine biosynthesis; L-histidine from 5-phospho-alpha-D-ribose 1-diphosphate: step 1/9. Its activity is regulated as follows. Feedback inhibited by histidine. Catalyzes the condensation of ATP and 5-phosphoribose 1-diphosphate to form N'-(5'-phosphoribosyl)-ATP (PR-ATP). Has a crucial role in the pathway because the rate of histidine biosynthesis seems to be controlled primarily by regulation of HisG enzymatic activity. The polypeptide is ATP phosphoribosyltransferase (Nitrobacter winogradskyi (strain ATCC 25391 / DSM 10237 / CIP 104748 / NCIMB 11846 / Nb-255)).